A 259-amino-acid chain; its full sequence is Putative protein-tyrosine sulfotransferase (259 aa).

Cys13 and Cys68 are joined by a disulfide. The Proton donor/acceptor role is filled by Glu16. N-linked (GlcNAc...) asparagine glycosylation is present at Asn36. 3'-phosphoadenylyl sulfate contacts are provided by Arg95, Ser103, and Arg107. A glycan (N-linked (GlcNAc...) asparagine) is linked at Asn115. Cys137 and Cys144 are oxidised to a cystine. Residues Tyr149 and 194–203 (SASQVKNSIN) contribute to the 3'-phosphoadenylyl sulfate site.

This sequence belongs to the protein sulfotransferase family.

The catalysed reaction is L-tyrosyl-[protein] + 3'-phosphoadenylyl sulfate = O-sulfo-L-tyrosine-[protein] + adenosine 3',5'-bisphosphate + H(+). Functionally, catalyzes the O-sulfation of tyrosine residues within acidic motifs of polypeptides, using 3'-phosphoadenylyl sulfate (PAPS) as cosubstrate. The sequence is that of Putative protein-tyrosine sulfotransferase (tpst-2) from Caenorhabditis elegans.